Consider the following 257-residue polypeptide: Acetylglutamate kinase (257 aa).

Substrate contacts are provided by residues 41-42 (GG), Arg-63, and Asn-158.

Belongs to the acetylglutamate kinase family. ArgB subfamily.

The protein localises to the cytoplasm. It catalyses the reaction N-acetyl-L-glutamate + ATP = N-acetyl-L-glutamyl 5-phosphate + ADP. It participates in amino-acid biosynthesis; L-arginine biosynthesis; N(2)-acetyl-L-ornithine from L-glutamate: step 2/4. Catalyzes the ATP-dependent phosphorylation of N-acetyl-L-glutamate. In Bacteroides thetaiotaomicron (strain ATCC 29148 / DSM 2079 / JCM 5827 / CCUG 10774 / NCTC 10582 / VPI-5482 / E50), this protein is Acetylglutamate kinase.